Here is a 131-residue protein sequence, read N- to C-terminus: Fluoride-specific ion channel FluC 2 (131 aa).

4 helical membrane-spanning segments follow: residues 5 to 25, 39 to 59, 70 to 90, and 104 to 124; these read FGVAVGGALGALARYGVSLLV, LATLLVNVLGSFLLAFITTLA, LAVGTGFIGALTTFSTFAWES, and LYVLGNLVLGYAAVLLGRALA. 2 residues coordinate Na(+): glycine 78 and threonine 81.

The protein belongs to the fluoride channel Fluc/FEX (TC 1.A.43) family.

The protein resides in the cell membrane. It catalyses the reaction fluoride(in) = fluoride(out). Its activity is regulated as follows. Na(+) is not transported, but it plays an essential structural role and its presence is essential for fluoride channel function. In terms of biological role, fluoride-specific ion channel. Important for reducing fluoride concentration in the cell, thus reducing its toxicity. The chain is Fluoride-specific ion channel FluC 2 from Deinococcus geothermalis (strain DSM 11300 / CIP 105573 / AG-3a).